A 638-amino-acid polypeptide reads, in one-letter code: Growth hormone receptor (638 aa).

An N-terminal signal peptide occupies residues Met1–Met18. The Extracellular segment spans residues Phe19 to Arg265. 2 cysteine pairs are disulfide-bonded: Cys56–Cys66 and Cys101–Cys112. Asn115 carries an N-linked (GlcNAc...) asparagine glycan. Cys126 and Cys140 are disulfide-bonded. Positions Pro151 to Met254 constitute a Fibronectin type-III domain. Residues Asn156, Asn161, and Asn200 are each glycosylated (N-linked (GlcNAc...) asparagine). The WSXWS motif motif lies at Tyr240–Ser244. The helical transmembrane segment at Phe266–Ser289 threads the bilayer. Topologically, residues Lys290 to Gln638 are cytoplasmic. The required for JAK2 binding stretch occupies residues Lys295–Ala380. A Box 1 motif motif is present at residues Ile298–Lys306. The UbE motif motif lies at Asp341–Asp350. Residue Ser342 is modified to Phosphoserine. The interval Lys357–Ser389 is disordered. A compositionally biased stretch (basic and acidic residues) spans Thr363–Lys373. Phosphotyrosine is present on residues Tyr487 and Tyr594.

It belongs to the type I cytokine receptor family. Type 1 subfamily. In terms of assembly, on growth hormone (GH) binding, forms homodimers and binds JAK2 via a box 1-containing domain. The soluble form (GHBP) is produced by phorbol ester-promoted proteolytic cleavage at the cell surface (shedding) by ADAM17/TACE. Shedding is inhibited by growth hormone (GH) binding to the receptor probably due to a conformational change in GHR rendering the receptor inaccessible to ADAM17. Post-translationally, on GH binding, phosphorylated on tyrosine residues in the cytoplasmic domain by JAK2. Phosphorylation on either (or all of) Tyr-534, Tyr-566 and/or Tyr-627 is required for STAT5 activation. Phosphorylation on Tyr-333 would seem necessary for JAK2 activation. In terms of processing, ubiquitinated by the ECS(SOCS2) complex following ligand-binding and phosphorylation by JAK2, leading to its degradation by the proteasome. Regulation by the ECS(SOCS2) complex acts as a negative feedback loop of growth hormone receptor signaling. Ubiquitination is not sufficient for GHR internalization. Highest expression in liver. Also expressed in heart, kidney and muscle.

It is found in the cell membrane. It localises to the secreted. Its function is as follows. Receptor for pituitary gland growth hormone involved in regulating postnatal body growth. On ligand binding, couples to, and activates the JAK2/STAT5 pathway. In terms of biological role, receptor for pituitary gland growth hormone (GH1) involved in regulating postnatal body growth. On ligand binding, couples to the JAK2/STAT5 pathway. Functionally, the soluble form (GHBP) acts as a reservoir of growth hormone in plasma and may be a modulator/inhibitor of GH signaling. The chain is Growth hormone receptor (Ghr) from Rattus norvegicus (Rat).